We begin with the raw amino-acid sequence, 516 residues long: Exodeoxyribonuclease 7 large subunit (516 aa).

Belongs to the XseA family. In terms of assembly, heterooligomer composed of large and small subunits.

The protein resides in the cytoplasm. It carries out the reaction Exonucleolytic cleavage in either 5'- to 3'- or 3'- to 5'-direction to yield nucleoside 5'-phosphates.. In terms of biological role, bidirectionally degrades single-stranded DNA into large acid-insoluble oligonucleotides, which are then degraded further into small acid-soluble oligonucleotides. This is Exodeoxyribonuclease 7 large subunit from Chlamydia trachomatis serovar L2 (strain ATCC VR-902B / DSM 19102 / 434/Bu).